The following is a 1335-amino-acid chain: Protein SPATA31F1 (1335 aa).

Residues 8–28 (LWEVGYPLYIYGSIFIVIVII) form a helical membrane-spanning segment. 5 disordered regions span residues 403–424 (ALKA…SGSD), 480–502 (LPKT…MSPS), 972–1002 (VQQN…SGDM), 1019–1141 (PSLE…LQDS), and 1248–1335 (ENVA…GHPT). The span at 414 to 424 (SGGQDNDSGSD) shows a compositional bias: polar residues. The segment covering 972-1000 (VQQNQKQSNSKAVPQGSAHSVSKISQPSG) has biased composition (polar residues). Composition is skewed to basic and acidic residues over residues 1047-1064 (NRED…REGD), 1071-1083 (STRE…EDQR), and 1129-1139 (PGEKESEKDLQ).

Belongs to the SPATA31 family.

The protein localises to the membrane. The chain is Protein SPATA31F1 from Homo sapiens (Human).